The chain runs to 399 residues: Phosphoglycerate kinase (399 aa).

Substrate-binding positions include 21–23, arginine 36, 59–62, arginine 120, and arginine 158; these read DFN and HLGR. ATP is bound by residues lysine 209, glycine 297, glutamate 328, and 355–358; that span reads GGDS.

This sequence belongs to the phosphoglycerate kinase family. Monomer.

It localises to the cytoplasm. It catalyses the reaction (2R)-3-phosphoglycerate + ATP = (2R)-3-phospho-glyceroyl phosphate + ADP. It participates in carbohydrate degradation; glycolysis; pyruvate from D-glyceraldehyde 3-phosphate: step 2/5. The polypeptide is Phosphoglycerate kinase (Streptococcus thermophilus (strain ATCC BAA-491 / LMD-9)).